We begin with the raw amino-acid sequence, 423 residues long: MLDTLLINIGQLLTMDQEDGLLRREAMNTLPVIENGAVGIENGVITFVGTVEEAKGLQAKEVIDCGGKMVSPGLVDPHTHLVFGGSRENEIALKLQGVPYLEILEKGGGILSTVNATKQASKEELVQKAKFHLDRMLSFGVTTVEAKSGYGLDDETEWKQLEATAQLQKEHPIDLVSTFLGAHAVPKEYKGRSKEFLQWMLDLLPEMKEKQLAEFVDIFCETGVFSVEESKDFLLKAKELGFDVKIHADEIDPLGGAEAAAEIGAASADHLVGASDKGIEMLANSNTVATLLPGTTFYLNKESFARGRKMIDEGVAVALATDFNPGSCPTENIQLIMSIAMLKLKMTPEEVWNAVTVNSSYAINRGEVAGKIRVGRKADLVLWDAYNYAYVPYHYGVSHVNTVWKNGNIAYTRGEQSWSTATI.

Fe(3+) is bound by residues H78 and H80. Residues H78 and H80 each contribute to the Zn(2+) site. 4-imidazolone-5-propanoate is bound by residues R87, Y150, and H183. An N-formimidoyl-L-glutamate-binding site is contributed by Y150. A Fe(3+)-binding site is contributed by H247. Zn(2+) is bound at residue H247. E250 is a 4-imidazolone-5-propanoate binding site. Fe(3+) is bound at residue D322. Position 322 (D322) interacts with Zn(2+). Residues N324 and G326 each contribute to the N-formimidoyl-L-glutamate site. 4-imidazolone-5-propanoate is bound at residue S327.

It belongs to the metallo-dependent hydrolases superfamily. HutI family. The cofactor is Zn(2+). Fe(3+) serves as cofactor.

It is found in the cytoplasm. The catalysed reaction is 4-imidazolone-5-propanoate + H2O = N-formimidoyl-L-glutamate. Its pathway is amino-acid degradation; L-histidine degradation into L-glutamate; N-formimidoyl-L-glutamate from L-histidine: step 3/3. In terms of biological role, catalyzes the hydrolytic cleavage of the carbon-nitrogen bond in imidazolone-5-propanoate to yield N-formimidoyl-L-glutamate. It is the third step in the universal histidine degradation pathway. This chain is Imidazolonepropionase, found in Bacillus cereus (strain ZK / E33L).